The sequence spans 194 residues: Fatty acid metabolism regulator protein (194 aa).

The HTH tetR-type domain maps to 5–65 (RPKYMQIIDA…SLFKEKMGQF (61 aa)). The segment at residues 28–47 (QVSKIAKQAGVADGTIYLYF) is a DNA-binding region (H-T-H motif).

Homodimer. Binds to DNA.

The protein localises to the cytoplasm. Functionally, transcriptional regulator in fatty acid degradation. Represses transcription of genes required for fatty acid transport and beta-oxidation, including acdA, fadA, fadB, fadE, fadF, fadG, fadH, fadM, fadN, lcfA and lcfB. Binding of FadR to DNA is specifically inhibited by long chain fatty acyl-CoA compounds of 14-20 carbon atoms in length. This chain is Fatty acid metabolism regulator protein (fadR), found in Bacillus subtilis (strain 168).